The following is a 35-amino-acid chain: Turripeptide gsp9a (35 aa).

4-hydroxyproline occurs at positions 3 and 4. 3 disulfide bridges follow: C7–C22, C12–C26, and C18–C33. 4-carboxyglutamate is present on residues E14 and E17.

In terms of tissue distribution, expressed by the venom duct.

It is found in the secreted. This Gemmula speciosa (Splendid gem-turris) protein is Turripeptide gsp9a.